The primary structure comprises 214 residues: Acetoin utilization protein AcuB (214 aa).

CBS domains are found at residues 7-66 (MKRD…ENKR) and 78-135 (MKKD…GADQ).

Interacts with YabA.

Its pathway is ketone degradation; acetoin degradation. Role in growth and sporulation on acetoin or butanediol. Involved in the breakdown of these compounds used as a carbon source. The chain is Acetoin utilization protein AcuB (acuB) from Bacillus subtilis (strain 168).